Consider the following 153-residue polypeptide: Endoribonuclease YbeY (153 aa).

Zn(2+) contacts are provided by His-114, His-118, and His-124.

This sequence belongs to the endoribonuclease YbeY family. Zn(2+) is required as a cofactor.

The protein resides in the cytoplasm. Functionally, single strand-specific metallo-endoribonuclease involved in late-stage 70S ribosome quality control and in maturation of the 3' terminus of the 16S rRNA. The protein is Endoribonuclease YbeY of Shewanella putrefaciens (strain CN-32 / ATCC BAA-453).